The sequence spans 78 residues: MVRILCDLIRWYQQGISAQRPFRVCRFTPSCSQYMLEALQRFGLKGILLGSWRLLRCQPFSRGGYDPVPNHFTFRRQG.

The protein belongs to the UPF0161 family.

Its subcellular location is the cell membrane. Could be involved in insertion of integral membrane proteins into the membrane. The sequence is that of Putative membrane protein insertion efficiency factor from Limosilactobacillus reuteri (strain DSM 20016) (Lactobacillus reuteri).